A 31-amino-acid chain; its full sequence is Cytochrome b6-f complex subunit 6 (31 aa).

A helical membrane pass occupies residues 4-24; it reads LTSYFGFLLAALTITFVLFIG.

It belongs to the PetL family. The 4 large subunits of the cytochrome b6-f complex are cytochrome b6, subunit IV (17 kDa polypeptide, PetD), cytochrome f and the Rieske protein, while the 4 small subunits are PetG, PetL, PetM and PetN. The complex functions as a dimer.

It localises to the plastid. Its subcellular location is the chloroplast thylakoid membrane. In terms of biological role, component of the cytochrome b6-f complex, which mediates electron transfer between photosystem II (PSII) and photosystem I (PSI), cyclic electron flow around PSI, and state transitions. PetL is important for photoautotrophic growth as well as for electron transfer efficiency and stability of the cytochrome b6-f complex. The sequence is that of Cytochrome b6-f complex subunit 6 from Oxybasis rubra (Red goosefoot).